The following is a 98-amino-acid chain: MTLVYMNMALAFTISLLGLLMYRSHLMSSLLCLEGMMLSLFVTMAVTILNSHLILANMIPIILLVFAACEAALGLSLLVMVSNTYGVDHVQNLNLLQC.

3 consecutive transmembrane segments (helical) span residues 1–21, 29–49, and 61–81; these read MTLVYMNMALAFTISLLGLLM, SLLCLEGMMLSLFVTMAVTIL, and IILLVFAACEAALGLSLLVMV.

The protein belongs to the complex I subunit 4L family. Core subunit of respiratory chain NADH dehydrogenase (Complex I) which is composed of 45 different subunits.

It is found in the mitochondrion inner membrane. It carries out the reaction a ubiquinone + NADH + 5 H(+)(in) = a ubiquinol + NAD(+) + 4 H(+)(out). Its function is as follows. Core subunit of the mitochondrial membrane respiratory chain NADH dehydrogenase (Complex I) which catalyzes electron transfer from NADH through the respiratory chain, using ubiquinone as an electron acceptor. Part of the enzyme membrane arm which is embedded in the lipid bilayer and involved in proton translocation. This chain is NADH-ubiquinone oxidoreductase chain 4L (MT-ND4L), found in Rousettus aegyptiacus (Egyptian fruit bat).